Reading from the N-terminus, the 137-residue chain is Large ribosomal subunit protein uL16 (137 aa).

Residues 1-22 (MLQPKRTKFRKVQKGRNRGLAH) are disordered.

Belongs to the universal ribosomal protein uL16 family. As to quaternary structure, part of the 50S ribosomal subunit.

In terms of biological role, binds 23S rRNA and is also seen to make contacts with the A and possibly P site tRNAs. The protein is Large ribosomal subunit protein uL16 of Chromohalobacter salexigens (strain ATCC BAA-138 / DSM 3043 / CIP 106854 / NCIMB 13768 / 1H11).